A 143-amino-acid polypeptide reads, in one-letter code: HTH-type transcriptional regulator CueR (143 aa).

The HTH merR-type domain maps to 11-79; sequence TYRISELAAL…LSDIKDRLEN (69 aa). Positions 14 to 33 form a DNA-binding region, H-T-H motif; it reads ISELAALAGVTKRTVDYYTN.

Its function is as follows. Transcriptional activator of the copZA operon. This is HTH-type transcriptional regulator CueR (cueR) from Bacillus subtilis (strain 168).